We begin with the raw amino-acid sequence, 366 residues long: tRNA/tmRNA (uracil-C(5))-methyltransferase (366 aa).

S-adenosyl-L-methionine is bound by residues Gln-190, Tyr-218, Asn-223, Glu-239, and Asp-299. Cys-324 (nucleophile) is an active-site residue. The Proton acceptor role is filled by Glu-358.

The protein belongs to the class I-like SAM-binding methyltransferase superfamily. RNA M5U methyltransferase family. TrmA subfamily.

It carries out the reaction uridine(54) in tRNA + S-adenosyl-L-methionine = 5-methyluridine(54) in tRNA + S-adenosyl-L-homocysteine + H(+). The catalysed reaction is uridine(341) in tmRNA + S-adenosyl-L-methionine = 5-methyluridine(341) in tmRNA + S-adenosyl-L-homocysteine + H(+). Its function is as follows. Dual-specificity methyltransferase that catalyzes the formation of 5-methyluridine at position 54 (m5U54) in all tRNAs, and that of position 341 (m5U341) in tmRNA (transfer-mRNA). The sequence is that of tRNA/tmRNA (uracil-C(5))-methyltransferase from Escherichia fergusonii (strain ATCC 35469 / DSM 13698 / CCUG 18766 / IAM 14443 / JCM 21226 / LMG 7866 / NBRC 102419 / NCTC 12128 / CDC 0568-73).